The chain runs to 434 residues: Mothers against decapentaplegic homolog 9 (434 aa).

Residues 16-140 (PAVKRLLGWK…YRRVETPVLP (125 aa)) enclose the MH1 domain. Positions 68, 113, 125, and 130 each coordinate Zn(2+). Residues 171-222 (MPHNATYPDSFQQSLGPAPPSSPGHVFPQSPCPTSYPQSPGSPSESDSPYQH) are disordered. A compositionally biased stretch (polar residues) spans 202-221 (CPTSYPQSPGSPSESDSPYQ). Positions 236-434 (WCSVAYYELN…SPHNPISSVS (199 aa)) constitute an MH2 domain.

Belongs to the dwarfin/SMAD family. Interaction with the co-SMAD SMAD4. Interacts with PEBP2-alpha subunit. Interacts with RANBP3L. Post-translationally, phosphorylated on serine by BMP (bone morphogenetic proteins) type 1 receptor kinase. Phosphorylated by activin type I receptor-like kinase-2 (ALK-2).

It localises to the cytoplasm. Its subcellular location is the nucleus. Functionally, transcriptional modulator activated by BMP (bone morphogenetic proteins) type 1 receptor kinase. SMAD9 is a receptor-regulated SMAD (R-SMAD). Has been shown to be activated by activin type I receptor-like kinase-2 (ALK-2) which stimulates heteromerization between SMAD9 and SMAD4. ALK-2 binds TGF-beta, activin and BMP. In Rattus norvegicus (Rat), this protein is Mothers against decapentaplegic homolog 9 (Smad9).